The primary structure comprises 355 residues: S-adenosylmethionine:tRNA ribosyltransferase-isomerase (355 aa).

Belongs to the QueA family. Monomer.

The protein resides in the cytoplasm. The enzyme catalyses 7-aminomethyl-7-carbaguanosine(34) in tRNA + S-adenosyl-L-methionine = epoxyqueuosine(34) in tRNA + adenine + L-methionine + 2 H(+). It participates in tRNA modification; tRNA-queuosine biosynthesis. Its function is as follows. Transfers and isomerizes the ribose moiety from AdoMet to the 7-aminomethyl group of 7-deazaguanine (preQ1-tRNA) to give epoxyqueuosine (oQ-tRNA). This is S-adenosylmethionine:tRNA ribosyltransferase-isomerase from Burkholderia orbicola (strain MC0-3).